Here is a 914-residue protein sequence, read N- to C-terminus: WAG22 antigen (914 aa).

In terms of domain architecture, PE spans 1–93 (MSFVIAVPET…GGAYAAAEAA (93 aa)). Disordered regions lie at residues 412–431 (GGSGGAGGSGGPAGTAAGGA) and 895–914 (AGAGGAGGLVLGRDGQHGLT). Positions 895 to 904 (AGAGGAGGLV) are enriched in gly residues.

It belongs to the mycobacterial PE family. PGRS subfamily.

The polypeptide is WAG22 antigen (wag22) (Mycobacterium bovis (strain ATCC BAA-935 / AF2122/97)).